Consider the following 678-residue polypeptide: RAS guanyl-releasing protein 4 (678 aa).

Composition is skewed to basic residues over residues 1–10 and 20–32; these read MNRKDIKRKS and GHGR…RHKT. Disordered regions lie at residues 1 to 33 and 165 to 185; these read MNRK…HKTC and GDAS…MSSP. The 127-residue stretch at 49 to 175 folds into the N-terminal Ras-GEF domain; it reads GVLSESSCSV…DASNLLSPGG (127 aa). Residues 201-432 form the Ras-GEF domain; sequence ETEELAQHLT…YELSYAREPR (232 aa). The EF-hand domain maps to 466 to 501; that stretch reads HVEQLVESVFKNYDPEGHGSISLEDFEKLSANFPFA. The Phorbol-ester/DAG-type zinc-finger motif lies at 540-595; the sequence is LHAFQEVTFRKPTFCHSCNGFVSTGPLWGVTKRGYRCQDCGLCCHRHCRDQVRVEC. Disordered stretches follow at residues 598–620 and 651–678; these read RPET…LPPT and SSHS…KSSV. A compositionally biased stretch (pro residues) spans 605-619; sequence PGPPGAPGPATPLPP.

It belongs to the RASGRP family. Expressed by mast cells and their progenitors (at protein level).

The protein resides in the cytoplasm. It is found in the cell membrane. In terms of biological role, functions as a cation- and diacylglycerol (DAG)-regulated nucleotide exchange factor activating Ras through the exchange of bound GDP for GTP. In neutrophils, participates in a phospholipase C-activating N-formyl peptide-activated GPCR (G protein-coupled receptor) signaling pathway by promoting Ras-mediated activation of PIK3CG/PI3Kgamma to promote neutrophil functional responses. In CD117(+) dendritic cells and mast cells, participates in an lipopolysaccharide (LPS)-activated signaling pathway that stimulates the production of interferon-gamma and other pro-inflammatory cytokines by natural killer (NK) cells. May function in mast cell differentiation. Does not appear to be required for the development of B-cells, DC-cells, T-cells, or NK-cells. The protein is RAS guanyl-releasing protein 4 (Rasgrp4) of Rattus norvegicus (Rat).